Here is a 197-residue protein sequence, read N- to C-terminus: Carbohydrate-binding X8 domain-containing protein (197 aa).

The first 19 residues, 1–19 (MAVLLPLFLLSFMFTYSNA), serve as a signal peptide directing secretion. Positions 101–113 (SCLSSSSSNGTPT) are enriched in low complexity. The segment at 101 to 176 (SCLSSSSSNG…TSGDPNGGEE (76 aa)) is disordered. The span at 116-125 (YPSTGNSTTA) shows a compositional bias: polar residues. A compositionally biased stretch (low complexity) spans 126–145 (SPGTTNPSTGNSTNSTLPTN). Polar residues predominate over residues 146-155 (DKPTSSTITF). Residues 156–170 (PDSTTMGPSSSTSGD) are compositionally biased toward low complexity. Asn-172 carries GPI-anchor amidated asparagine lipidation. A propeptide spans 173 to 197 (GGEELSVRTTTIILLTTIAAVALRV) (removed in mature form).

As to expression, expressed in the sieve elements.

It is found in the cell membrane. The polypeptide is Carbohydrate-binding X8 domain-containing protein (Arabidopsis thaliana (Mouse-ear cress)).